The sequence spans 856 residues: Envelope glycoprotein gp160 (856 aa).

An N-terminal signal peptide occupies residues 1-31 (MRVEGIQRNWKQWWIWGILGFWMVMIYNVRG). Residues 32–677 (NLWVTVYYGV…ITNWLWYIKI (646 aa)) lie on the Extracellular side of the membrane. The cysteines at positions 53 and 73 are disulfide-linked. 18 N-linked (GlcNAc...) asparagine; by host glycosylation sites follow: asparagine 87, asparagine 132, asparagine 139, asparagine 150, asparagine 154, asparagine 180, asparagine 184, asparagine 195, asparagine 228, asparagine 232, asparagine 239, asparagine 260, asparagine 274, asparagine 287, asparagine 293, asparagine 299, asparagine 329, and asparagine 336. 5 cysteine pairs are disulfide-bonded: cysteine 118–cysteine 203, cysteine 125–cysteine 194, cysteine 130–cysteine 151, cysteine 216–cysteine 245, and cysteine 226–cysteine 237. The tract at residues 130 to 150 (CSNRTIDYNNRTDNMGGEIKN) is V1. Positions 151–194 (CSFNMTTEVRDKREKVHALFYRLDIVPLKNESSNTSGDYRLINC) are V2. The V3 stretch occupies residues 294 to 327 (CTRPNNNTRKSIRIGPGQAFYATGEIIGDIRQAH). Residues cysteine 294 and cysteine 328 are joined by a disulfide bond. The tract at residues 360–370 (HSGGDLEITTH) is CD4-binding loop. 2 disulfides stabilise this stretch: cysteine 374-cysteine 438 and cysteine 381-cysteine 411. The interval 381–411 (CNTSSLFNSTYTPNSTENITGTENSIITIPC) is V4. Asparagine 382, asparagine 388, asparagine 394, asparagine 398, and asparagine 441 each carry an N-linked (GlcNAc...) asparagine; by host glycan. 2 V5 regions span residues 454–464 (GMHDTEIFRPE) and 456–464 (HDTEIFRPE). The interval 505 to 525 (AVGIGAVFLGFLGAAGSTMGA) is fusion peptide. Residues 567-585 (KQLQTRVLAIERYLRDQQL) are immunosuppression. Cysteine 591 and cysteine 597 are oxidised to a cystine. Asparagine 604, asparagine 609, asparagine 618, and asparagine 630 each carry an N-linked (GlcNAc...) asparagine; by host glycan. The stretch at 626–660 (REISNYTNTIYRLLEDSQNQQEKNEQDLLALDKWQ) forms a coiled coil. The tract at residues 655–676 (ALDKWQNLWTWFGITNWLWYIK) is MPER; binding to GalCer. A helical membrane pass occupies residues 678-698 (FIKIVGGLIGLRIIFAVLSIV). The Cytoplasmic segment spans residues 699–856 (NRVRQGYSPL…IRQGFEAALQ (158 aa)). A YXXL motif; contains endocytosis signal motif is present at residues 705 to 708 (YSPL). The disordered stretch occupies residues 712–732 (TLTPNPRGPDRLGGIEEEGGE). Residue cysteine 757 is the site of S-palmitoyl cysteine; by host attachment.

The protein belongs to the HIV-1 env protein family. In terms of assembly, the mature envelope protein (Env) consists of a homotrimer of non-covalently associated gp120-gp41 heterodimers. The resulting complex protrudes from the virus surface as a spike. There seems to be as few as 10 spikes on the average virion. Interacts with host CD4, CCR5 and CXCR4. Gp120 also interacts with the C-type lectins CD209/DC-SIGN and CLEC4M/DC-SIGNR (collectively referred to as DC-SIGN(R)). Gp120 and gp41 interact with GalCer. Gp120 interacts with host ITGA4/ITGB7 complex; on CD4+ T-cells, this interaction results in rapid activation of integrin ITGAL/LFA-1, which facilitates efficient cell-to-cell spreading of HIV-1. Gp120 interacts with cell-associated heparan sulfate; this interaction increases virus infectivity on permissive cells and may be involved in infection of CD4- cells. As to quaternary structure, the mature envelope protein (Env) consists of a homotrimer of non-covalently associated gp120-gp41 heterodimers. The resulting complex protrudes from the virus surface as a spike. There seems to be as few as 10 spikes on the average virion. Highly glycosylated by host. The high number of glycan on the protein is reffered to as 'glycan shield' because it contributes to hide protein sequence from adaptive immune system. In terms of processing, palmitoylation of the transmembrane protein and of Env polyprotein (prior to its proteolytic cleavage) is essential for their association with host cell membrane lipid rafts. Palmitoylation is therefore required for envelope trafficking to classical lipid rafts, but not for viral replication. Post-translationally, specific enzymatic cleavages in vivo yield mature proteins. Envelope glycoproteins are synthesized as an inactive precursor that is heavily N-glycosylated and processed likely by host cell furin in the Golgi to yield the mature SU and TM proteins. The cleavage site between SU and TM requires the minimal sequence [KR]-X-[KR]-R. About 2 of the 9 disulfide bonds of gp41 are reduced by P4HB/PDI, following binding to CD4 receptor.

It localises to the virion membrane. It is found in the host cell membrane. The protein localises to the host endosome membrane. Its function is as follows. Oligomerizes in the host endoplasmic reticulum into predominantly trimers. In a second time, gp160 transits in the host Golgi, where glycosylation is completed. The precursor is then proteolytically cleaved in the trans-Golgi and thereby activated by cellular furin or furin-like proteases to produce gp120 and gp41. In terms of biological role, attaches the virus to the host lymphoid cell by binding to the primary receptor CD4. This interaction induces a structural rearrangement creating a high affinity binding site for a chemokine coreceptor like CXCR4 and/or CCR5. Acts as a ligand for CD209/DC-SIGN and CLEC4M/DC-SIGNR, which are respectively found on dendritic cells (DCs), and on endothelial cells of liver sinusoids and lymph node sinuses. These interactions allow capture of viral particles at mucosal surfaces by these cells and subsequent transmission to permissive cells. HIV subverts the migration properties of dendritic cells to gain access to CD4+ T-cells in lymph nodes. Virus transmission to permissive T-cells occurs either in trans (without DCs infection, through viral capture and transmission), or in cis (following DCs productive infection, through the usual CD4-gp120 interaction), thereby inducing a robust infection. In trans infection, bound virions remain infectious over days and it is proposed that they are not degraded, but protected in non-lysosomal acidic organelles within the DCs close to the cell membrane thus contributing to the viral infectious potential during DCs' migration from the periphery to the lymphoid tissues. On arrival at lymphoid tissues, intact virions recycle back to DCs' cell surface allowing virus transmission to CD4+ T-cells. Acts as a class I viral fusion protein. Under the current model, the protein has at least 3 conformational states: pre-fusion native state, pre-hairpin intermediate state, and post-fusion hairpin state. During fusion of viral and target intracellular membranes, the coiled coil regions (heptad repeats) assume a trimer-of-hairpins structure, positioning the fusion peptide in close proximity to the C-terminal region of the ectodomain. The formation of this structure appears to drive apposition and subsequent fusion of viral and target cell membranes. Complete fusion occurs in host cell endosomes and is dynamin-dependent, however some lipid transfer might occur at the plasma membrane. The virus undergoes clathrin-dependent internalization long before endosomal fusion, thus minimizing the surface exposure of conserved viral epitopes during fusion and reducing the efficacy of inhibitors targeting these epitopes. Membranes fusion leads to delivery of the nucleocapsid into the cytoplasm. The chain is Envelope glycoprotein gp160 from Homo sapiens (Human).